The chain runs to 239 residues: Ribonuclease PH (239 aa).

Phosphate is bound by residues arginine 86 and 124–126 (GTR).

This sequence belongs to the RNase PH family. In terms of assembly, homohexameric ring arranged as a trimer of dimers.

The catalysed reaction is tRNA(n+1) + phosphate = tRNA(n) + a ribonucleoside 5'-diphosphate. In terms of biological role, phosphorolytic 3'-5' exoribonuclease that plays an important role in tRNA 3'-end maturation. Removes nucleotide residues following the 3'-CCA terminus of tRNAs; can also add nucleotides to the ends of RNA molecules by using nucleoside diphosphates as substrates, but this may not be physiologically important. Probably plays a role in initiation of 16S rRNA degradation (leading to ribosome degradation) during starvation. The protein is Ribonuclease PH of Rickettsia bellii (strain RML369-C).